The chain runs to 103 residues: UPF0145 protein PTH_2690 (103 aa).

This sequence belongs to the UPF0145 family.

The protein is UPF0145 protein PTH_2690 of Pelotomaculum thermopropionicum (strain DSM 13744 / JCM 10971 / SI).